Here is a 451-residue protein sequence, read N- to C-terminus: Phosphoglucosamine mutase (451 aa).

Ser107 functions as the Phosphoserine intermediate in the catalytic mechanism. Ser107, Asp246, Asp248, and Asp250 together coordinate Mg(2+). Residue Ser107 is modified to Phosphoserine.

It belongs to the phosphohexose mutase family. The cofactor is Mg(2+). In terms of processing, activated by phosphorylation.

The enzyme catalyses alpha-D-glucosamine 1-phosphate = D-glucosamine 6-phosphate. In terms of biological role, catalyzes the conversion of glucosamine-6-phosphate to glucosamine-1-phosphate. This is Phosphoglucosamine mutase from Burkholderia multivorans (strain ATCC 17616 / 249).